The primary structure comprises 316 residues: tRNA dimethylallyltransferase (316 aa).

17–24 (GPTASGKT) contributes to the ATP binding site. Substrate is bound at residue 19 to 24 (TASGKT). 4 interaction with substrate tRNA regions span residues 42–45 (DSAL), 166–170 (QRLSR), 247–252 (RCVGYR), and 280–287 (KRQITWLR).

The protein belongs to the IPP transferase family. Monomer. Mg(2+) is required as a cofactor.

The catalysed reaction is adenosine(37) in tRNA + dimethylallyl diphosphate = N(6)-dimethylallyladenosine(37) in tRNA + diphosphate. Its function is as follows. Catalyzes the transfer of a dimethylallyl group onto the adenine at position 37 in tRNAs that read codons beginning with uridine, leading to the formation of N6-(dimethylallyl)adenosine (i(6)A). This is tRNA dimethylallyltransferase from Shigella flexneri serotype 5b (strain 8401).